The following is a 176-amino-acid chain: Peptide methionine sulfoxide reductase MsrA (176 aa).

Residue Cys12 is part of the active site.

Belongs to the MsrA Met sulfoxide reductase family.

The enzyme catalyses L-methionyl-[protein] + [thioredoxin]-disulfide + H2O = L-methionyl-(S)-S-oxide-[protein] + [thioredoxin]-dithiol. The catalysed reaction is [thioredoxin]-disulfide + L-methionine + H2O = L-methionine (S)-S-oxide + [thioredoxin]-dithiol. Functionally, has an important function as a repair enzyme for proteins that have been inactivated by oxidation. Catalyzes the reversible oxidation-reduction of methionine sulfoxide in proteins to methionine. In Thermus thermophilus (strain ATCC BAA-163 / DSM 7039 / HB27), this protein is Peptide methionine sulfoxide reductase MsrA.